The sequence spans 247 residues: Fibroblast growth factor 14 (247 aa).

2 disordered regions span residues Met-1 to Gly-38 and Val-214 to Thr-247. Over residues Gln-15–Ser-25 the composition is skewed to basic and acidic residues.

This sequence belongs to the heparin-binding growth factors family. Interacts with SCN8A. As to expression, nervous system.

It localises to the nucleus. Functionally, probably involved in nervous system development and function. The chain is Fibroblast growth factor 14 (FGF14) from Homo sapiens (Human).